The primary structure comprises 561 residues: Putative transport protein ASA_2308 (561 aa).

5 helical membrane passes run 8–28 (LLHQSDSLLLFVVLAFGLLLG), 37–57 (IGNTIGVLFTALLFGQMGFEF), 66–86 (FMLFIFCVGIEAGPHFFSVFL), 90–110 (IHYITLTLVILLTALLLTVGL), and 161–181 (NMGIGYALTYLVGLVGLMLVV). RCK C-terminal domains are found at residues 206–291 (SDNE…NYRN) and 293–376 (KEVF…KIGF). The next 5 helical transmembrane spans lie at 386–406 (LVAFTTFFVLGLLIGSVSLVF), 409–429 (LEFGLGNAVGLLLAGILMGYL), 450–470 (LGLAVFMVSTGLKAGGGILDH), 476–496 (AVVLFSGMLVTTLPVLVGYLF), and 541–561 (TYAVANVMLTLAGSFIIGFWF).

It belongs to the AAE transporter (TC 2.A.81) family. YbjL subfamily.

It localises to the cell membrane. This Aeromonas salmonicida (strain A449) protein is Putative transport protein ASA_2308.